A 207-amino-acid polypeptide reads, in one-letter code: Chaperone protein TorD (207 aa).

The protein belongs to the TorD/DmsD family. TorD subfamily.

It is found in the cytoplasm. Involved in the biogenesis of TorA. Acts on TorA before the insertion of the molybdenum cofactor and, as a result, probably favors a conformation of the apoenzyme that is competent for acquiring the cofactor. In Aggregatibacter aphrophilus (strain NJ8700) (Haemophilus aphrophilus), this protein is Chaperone protein TorD.